A 464-amino-acid polypeptide reads, in one-letter code: Mitogen-activated protein kinase 10 (464 aa).

The Protein kinase domain occupies 64-359; the sequence is YQNLKPIGSG…VDDALQHPYI (296 aa). ATP-binding positions include 70–78 and lysine 93; that span reads IGSGAQGIV. The active-site Proton acceptor is the aspartate 189. The residue at position 221 (threonine 221) is a Phosphothreonine; by MAP2K7. The short motif at 221–223 is the TXY element; that stretch reads TPY. Tyrosine 223 is subject to Phosphotyrosine; by MAP2K4. The disordered stretch occupies residues 405–464; sequence TKNGVVKGQPSPSGAAVNSSESLPPSSSVNDISSMSTDQTLASDTDSSLEASAGPLGCCR. Low complexity predominate over residues 423–432; that stretch reads SSESLPPSSS. The span at 433–454 shows a compositional bias: polar residues; it reads VNDISSMSTDQTLASDTDSSLE. 2 S-palmitoyl cysteine lipidation sites follow: cysteine 462 and cysteine 463.

It belongs to the protein kinase superfamily. CMGC Ser/Thr protein kinase family. MAP kinase subfamily. In terms of assembly, interacts with MAPKBP1. Interacts with MAPK8IP1/JIP-1 and MAPK8IP3/JIP-3/JSAP1. Interacts with SPAG9/MAPK8IP4/JIP4. Interacts with HDAC9. Interacts with ARRB2; the interaction enhances MAPK10 activation by MAP3K5. Interacts with SARM1. Interacts with JUND; interaction is inhibited in the presence of MEN1. It depends on Mg(2+) as a cofactor. In terms of processing, dually phosphorylated on Thr-221 and Tyr-223 by MAP2K4 and MAP2K7, which activates the enzyme. MAP2K7 shows a strong preference for Thr-221 while MAP2K4 phosphorylates Tyr-223 preferentially. Weakly autophosphorylated on threonine and tyrosine residues in vitro. Palmitoylation regulates subcellular location and axonal development. As to expression, specific to a subset of neurons in the nervous system. Present in the hippocampus and areas, cerebellum, striatum, brain stem, and weakly in the spinal cord. Very weak expression in testis and kidney.

The protein localises to the cytoplasm. It is found in the membrane. The protein resides in the nucleus. It localises to the mitochondrion. It catalyses the reaction L-seryl-[protein] + ATP = O-phospho-L-seryl-[protein] + ADP + H(+). It carries out the reaction L-threonyl-[protein] + ATP = O-phospho-L-threonyl-[protein] + ADP + H(+). With respect to regulation, activated by threonine and tyrosine phosphorylation by two dual specificity kinases, MAP2K4 and MAP2K7. MAP2K7 phosphorylates MAPK10 on Thr-221 causing a conformational change and a large increase in Vmax. MAP2K4 then phosphorylates Tyr-223 resulting in a further increase in Vmax. Inhibited by dual specificity phosphatases, such as DUSP1. Inhibited by HDAC9. In terms of biological role, serine/threonine-protein kinase involved in various processes such as neuronal proliferation, differentiation, migration and programmed cell death. Extracellular stimuli such as pro-inflammatory cytokines or physical stress stimulate the stress-activated protein kinase/c-Jun N-terminal kinase (SAP/JNK) signaling pathway. In this cascade, two dual specificity kinases MAP2K4/MKK4 and MAP2K7/MKK7 phosphorylate and activate MAPK10/JNK3. In turn, MAPK10/JNK3 phosphorylates a number of transcription factors, primarily components of AP-1 such as JUN and ATF2 and thus regulates AP-1 transcriptional activity. Plays regulatory roles in the signaling pathways during neuronal apoptosis. Phosphorylates the neuronal microtubule regulator STMN2. Acts in the regulation of the amyloid-beta precursor protein/APP signaling during neuronal differentiation by phosphorylating APP. Also participates in neurite growth in spiral ganglion neurons. Phosphorylates the CLOCK-BMAL1 heterodimer and plays a role in the photic regulation of the circadian clock. Phosphorylates JUND and this phosphorylation is inhibited in the presence of MEN1. The sequence is that of Mitogen-activated protein kinase 10 (MAPK10) from Homo sapiens (Human).